The following is a 427-amino-acid chain: DEAD-box ATP-dependent RNA helicase 56 (427 aa).

A disordered region spans residues 1–30 (MGDARDNEAYEEELLDYEEEDEKVPDSGNK). Acidic residues predominate over residues 9–23 (AYEEELLDYEEEDEK). The short motif at 46 to 74 (SGFRDFLLKPELLRAIVDSGFEHPSEVQH) is the Q motif element. The region spanning 77–250 (IPQAILGMDV…KKFMQDPMEI (174 aa)) is the Helicase ATP-binding domain. 90-97 (AKSGMGKT) contributes to the ATP binding site. The DECD box motif lies at 197 to 200 (DECD). Residues 278 to 423 (KLNDLLDALD…ELPEQIDTST (146 aa)) form the Helicase C-terminal domain.

Belongs to the DEAD box helicase family. DECD subfamily. Interacts with ALY2 and MOS11.

It localises to the nucleus. It catalyses the reaction ATP + H2O = ADP + phosphate + H(+). ATP-dependent RNA helicase involved in pre-mRNA splicing. Required for the export of mRNA out of the nucleus. In addition to ssRNA and dsRNA, binds dsDNA, but not ssDNA. The chain is DEAD-box ATP-dependent RNA helicase 56 (RH56) from Arabidopsis thaliana (Mouse-ear cress).